We begin with the raw amino-acid sequence, 368 residues long: Endophilin-A2 (368 aa).

A membrane-binding amphipathic helix region spans residues 1 to 21; that stretch reads MSVAGLKKQFYKASQLVSEKV. Residues 18–249 form the BAR domain; it reads SEKVGGAEGT…LKRRMREASS (232 aa). Residues 60 to 87 form a required for dimerization upon membrane association region; the sequence is PNPASRAKLTMLNTVSKIRGQVKNPGYP. Residues 145 to 250 adopt a coiled-coil conformation; sequence NLCEKDLKEI…KRRMREASSR (106 aa). The tract at residues 218-254 is interaction with ARC; sequence LVDAQLDYHRQAVQILDELAEKLKRRMREASSRPKRE. The interval 244-308 is disordered; it reads MREASSRPKR…PSRSMPPLDQ (65 aa). Positions 245 to 263 are enriched in basic and acidic residues; sequence REASSRPKREYKPKPREPF. Ser288 and Ser292 each carry phosphoserine. Thr298 bears the Phosphothreonine mark. Positions 306 to 365 constitute an SH3 domain; sequence LDQPSCKALYDFEPENDGELGFHEGDVITLTNQIDENWYEGMLDGQSGFFPLSYVEVLVP. Tyr315 is modified (phosphotyrosine).

It belongs to the endophilin family. As to quaternary structure, interacts with ARC. Interacts with SYNJ1 and DNM1. Interacts with PDCD6IP. Interacts with BIN2. Ubiquitous. Higher expression in pancreas, placenta, prostate, testis and uterus.

The protein resides in the cytoplasm. It is found in the early endosome membrane. Its subcellular location is the cell projection. The protein localises to the podosome. Its function is as follows. Implicated in endocytosis. May recruit other proteins to membranes with high curvature. This chain is Endophilin-A2 (SH3GL1), found in Homo sapiens (Human).